The chain runs to 96 residues: ATP synthase subunit c (96 aa).

The next 2 membrane-spanning stretches (helical) occupy residues 26–46 and 68–88; these read GLVLFGAAIGMAIAAAGCGIG and IMVTLILGLAFVESLAIYALV.

The protein belongs to the ATPase C chain family. As to quaternary structure, F-type ATPases have 2 components, F(1) - the catalytic core - and F(0) - the membrane proton channel. F(1) has five subunits: alpha(3), beta(3), gamma(1), delta(1), epsilon(1). F(0) has three main subunits: a(1), b(2) and c(10-14). The alpha and beta chains form an alternating ring which encloses part of the gamma chain. F(1) is attached to F(0) by a central stalk formed by the gamma and epsilon chains, while a peripheral stalk is formed by the delta and b chains.

The protein resides in the cell inner membrane. Its function is as follows. F(1)F(0) ATP synthase produces ATP from ADP in the presence of a proton or sodium gradient. F-type ATPases consist of two structural domains, F(1) containing the extramembraneous catalytic core and F(0) containing the membrane proton channel, linked together by a central stalk and a peripheral stalk. During catalysis, ATP synthesis in the catalytic domain of F(1) is coupled via a rotary mechanism of the central stalk subunits to proton translocation. Functionally, key component of the F(0) channel; it plays a direct role in translocation across the membrane. A homomeric c-ring of between 10-14 subunits forms the central stalk rotor element with the F(1) delta and epsilon subunits. In Oleidesulfovibrio alaskensis (strain ATCC BAA-1058 / DSM 17464 / G20) (Desulfovibrio alaskensis), this protein is ATP synthase subunit c.